Consider the following 355-residue polypeptide: UDP-N-acetylglucosamine--N-acetylmuramyl-(pentapeptide) pyrophosphoryl-undecaprenol N-acetylglucosamine transferase (355 aa).

Residues 15–17, N127, R163, S191, I244, 263–268, and Q288 each bind UDP-N-acetyl-alpha-D-glucosamine; these read TGG and ALTVSE.

The protein belongs to the glycosyltransferase 28 family. MurG subfamily.

The protein resides in the cell inner membrane. It catalyses the reaction di-trans,octa-cis-undecaprenyl diphospho-N-acetyl-alpha-D-muramoyl-L-alanyl-D-glutamyl-meso-2,6-diaminopimeloyl-D-alanyl-D-alanine + UDP-N-acetyl-alpha-D-glucosamine = di-trans,octa-cis-undecaprenyl diphospho-[N-acetyl-alpha-D-glucosaminyl-(1-&gt;4)]-N-acetyl-alpha-D-muramoyl-L-alanyl-D-glutamyl-meso-2,6-diaminopimeloyl-D-alanyl-D-alanine + UDP + H(+). The protein operates within cell wall biogenesis; peptidoglycan biosynthesis. In terms of biological role, cell wall formation. Catalyzes the transfer of a GlcNAc subunit on undecaprenyl-pyrophosphoryl-MurNAc-pentapeptide (lipid intermediate I) to form undecaprenyl-pyrophosphoryl-MurNAc-(pentapeptide)GlcNAc (lipid intermediate II). This is UDP-N-acetylglucosamine--N-acetylmuramyl-(pentapeptide) pyrophosphoryl-undecaprenol N-acetylglucosamine transferase from Salmonella enteritidis PT4 (strain P125109).